A 91-amino-acid polypeptide reads, in one-letter code: Acylphosphatase (91 aa).

The Acylphosphatase-like domain maps to 3 to 89; sequence AKHLILSGRV…PAEPGFVKRA (87 aa). Active-site residues include Arg18 and Asn36.

This sequence belongs to the acylphosphatase family.

The enzyme catalyses an acyl phosphate + H2O = a carboxylate + phosphate + H(+). This Acidiphilium cryptum (strain JF-5) protein is Acylphosphatase (acyP).